Here is a 219-residue protein sequence, read N- to C-terminus: MQFQTLLVVAGSLVASTLAVNSTVTEHHTTEITITHCSDNKCATSVAPAVQSVNTVTIEGVVTEYTTYCPLTASEHKHKESSSPSSVAPVASTESVVTTTISGVHTSYTTYCPLSGSSEASTVITPGTVAGESSSSSEEVSYVDVTSTPVVESTTDVELTLTAQSTLFTSYANSTGSSSSSSVVPSANVTTFEGGAVGGASNQITVGFAAIAGLAAILL.

An N-terminal signal peptide occupies residues 1–19 (MQFQTLLVVAGSLVASTLA). N-linked (GlcNAc...) asparagine glycans are attached at residues Asn-21, Asn-173, and Asn-188. Gly-194 is lipidated: GPI-anchor amidated glycine. Positions 195-219 (GAVGGASNQITVGFAAIAGLAAILL) are cleaved as a propeptide — removed in mature form.

It belongs to the flocculin family. In terms of processing, the GPI-anchor is attached to the protein in the endoplasmic reticulum and serves to target the protein to the cell surface. There, the glucosamine-inositol phospholipid moiety is cleaved off and the GPI-modified mannoprotein is covalently attached via its lipidless GPI glycan remnant to the 1,6-beta-glucan of the outer cell wall layer.

It is found in the secreted. The protein resides in the cell wall. Its subcellular location is the membrane. Functionally, probable cell wall protein that participates directly in adhesive cell-cell interactions. The protein is Predicted GPI-anchored protein 6 (PGA6) of Candida albicans (strain SC5314 / ATCC MYA-2876) (Yeast).